The following is a 113-amino-acid chain: uncharacterized protein (113 aa).

A signal peptide spans 1–29 (MLVVYMCIWVLYLLLFLFLFLFIASPASL). The next 2 helical transmembrane spans lie at 34-54 (THIL…CAFF) and 56-76 (QVLC…FYFF).

The protein resides in the membrane. This is an uncharacterized protein from Saccharomyces cerevisiae (strain ATCC 204508 / S288c) (Baker's yeast).